A 98-amino-acid polypeptide reads, in one-letter code: MAETKYEVTYIIRPDLDDAAKTELVERFDNILKENGANIIDSKDWQKRKLAYEINKYNEGLYHIVNLSAEDDKAINEFDRLGKINNDILRHMIVKRED.

It belongs to the bacterial ribosomal protein bS6 family.

Functionally, binds together with bS18 to 16S ribosomal RNA. This is Small ribosomal subunit protein bS6 from Lacticaseibacillus paracasei (strain ATCC 334 / BCRC 17002 / CCUG 31169 / CIP 107868 / KCTC 3260 / NRRL B-441) (Lactobacillus paracasei).